The sequence spans 59 residues: Anti-inflammatory peptide amregulin (59 aa).

An N-terminal signal peptide occupies residues 1–19; it reads MKLHMLNMLNCLLLTVCDG.

In terms of tissue distribution, salivary glands.

The protein resides in the secreted. Anti-inflammatory peptide that may facilitate successful blood feeding of ticks and may lead to immunotolerance in its host. Inhibits the secretion of inflammatory factors in rat splenocytes, such as tumor necrosis factor-alpha (TNF), interleukin-1, interleukin-8 (CXCL8) and interferon-gamma (IFNG). In addition, shows strong free radical scavenging and antioxidant activities in vitro. In vivo, inhibits adjuvant-induced paw inflammation in mouse models. This Amblyomma variegatum (Tropical bont tick) protein is Anti-inflammatory peptide amregulin.